The sequence spans 267 residues: Tryptophan synthase alpha chain (267 aa).

Active-site proton acceptor residues include Glu-47 and Asp-58.

It belongs to the TrpA family. As to quaternary structure, tetramer of two alpha and two beta chains.

The catalysed reaction is (1S,2R)-1-C-(indol-3-yl)glycerol 3-phosphate + L-serine = D-glyceraldehyde 3-phosphate + L-tryptophan + H2O. It functions in the pathway amino-acid biosynthesis; L-tryptophan biosynthesis; L-tryptophan from chorismate: step 5/5. In terms of biological role, the alpha subunit is responsible for the aldol cleavage of indoleglycerol phosphate to indole and glyceraldehyde 3-phosphate. The chain is Tryptophan synthase alpha chain from Prosthecochloris aestuarii (strain DSM 271 / SK 413).